Consider the following 1161-residue polypeptide: DNA-directed RNA polymerase subunit beta (1161 aa).

It belongs to the RNA polymerase beta chain family. In terms of assembly, the RNAP catalytic core consists of 2 alpha, 1 beta, 1 beta' and 1 omega subunit. When a sigma factor is associated with the core the holoenzyme is formed, which can initiate transcription. The RNAP complex including the principal sigma factor HrdB also interacts with RNA-binding protein RbpA.

The catalysed reaction is RNA(n) + a ribonucleoside 5'-triphosphate = RNA(n+1) + diphosphate. Its function is as follows. DNA-dependent RNA polymerase catalyzes the transcription of DNA into RNA using the four ribonucleoside triphosphates as substrates. The protein is DNA-directed RNA polymerase subunit beta of Streptomyces coelicolor (strain ATCC BAA-471 / A3(2) / M145).